The primary structure comprises 146 residues: VHLTADEKSAVTGLWGKVNVEEVGGEALGRLLVVYPWTQRFFESFGDLSNAGAVMGNAKVKAHGKKVLNAFSDGLKNLDNLKGTFAKLSELHCDKLHVDPENFRLLGNVLMIVLARHFGKEFCPPVQAAFQKVSLGVATALGHKYH.

An N-acetylvaline modification is found at Val-1. The 145-residue stretch at 2–146 folds into the Globin domain; the sequence is HLTADEKSAV…VATALGHKYH (145 aa). Thr-12 is subject to Phosphothreonine. At Ser-44 the chain carries Phosphoserine. Lys-59 bears the N6-acetyllysine mark. His-63 is a heme b binding site. N6-acetyllysine is present on Lys-82. His-92 contributes to the heme b binding site. An S-nitrosocysteine modification is found at Cys-93. N6-acetyllysine is present on Lys-144.

The protein belongs to the globin family. Heterotetramer of two alpha chains and two beta chains. In terms of tissue distribution, red blood cells.

In terms of biological role, involved in oxygen transport from the lung to the various peripheral tissues. This is Hemoglobin subunit beta (HBB) from Antrozous pallidus (Pallid bat).